A 427-amino-acid chain; its full sequence is Adenylosuccinate synthetase (427 aa).

Residues 12 to 18 (GDEGKGK) and 40 to 42 (GHT) each bind GTP. Asp13 serves as the catalytic Proton acceptor. Residues Asp13 and Gly40 each coordinate Mg(2+). IMP is bound by residues 13 to 16 (DEGK), 38 to 41 (NAGH), Thr128, Arg142, Gln223, Thr238, and Arg302. His41 serves as the catalytic Proton donor. 298–304 (TTTGRPR) contributes to the substrate binding site. GTP is bound by residues Arg304, 330-332 (KLD), and 412-414 (GVG).

It belongs to the adenylosuccinate synthetase family. In terms of assembly, homodimer. It depends on Mg(2+) as a cofactor.

It localises to the cytoplasm. The enzyme catalyses IMP + L-aspartate + GTP = N(6)-(1,2-dicarboxyethyl)-AMP + GDP + phosphate + 2 H(+). It functions in the pathway purine metabolism; AMP biosynthesis via de novo pathway; AMP from IMP: step 1/2. Functionally, plays an important role in the de novo pathway of purine nucleotide biosynthesis. Catalyzes the first committed step in the biosynthesis of AMP from IMP. This chain is Adenylosuccinate synthetase, found in Pelotomaculum thermopropionicum (strain DSM 13744 / JCM 10971 / SI).